The following is a 712-amino-acid chain: Dipeptidyl-peptidase 7 (712 aa).

An N-terminal signal peptide occupies residues 1–23; sequence MQMKLKSILLGAALLLGASGVAK. His89 (charge relay system) is an active-site residue. Residues 136–173 are a coiled coil; that stretch reads TDKVEGQLKGITDEMERLRKAQEVCQELAKKENADENQ. Catalysis depends on charge relay system residues Asp225 and Ser648.

This sequence belongs to the peptidase S46 family.

It localises to the cell outer membrane. With respect to regulation, is inhibited in vitro by typical serine protease inhibitors like diisopropyl fluorophosphate, Pefablock, and 3,4-dichloroisocoumarin, but not by typical cysteine class inhibitors such as E-64 or iododoacetic acid. In terms of biological role, catalyzes the removal of dipeptides from the N-terminus of oligopeptides. Shows a broad specificity for both aliphatic and aromatic residues in the P1 position, with glycine or proline being not acceptable in this position. Most potently cleaves the synthetic substrate Met-Leu-methylcoumaryl-7-amide (Met-Leu-MCA), Leu-Arg-MCA and Lys-Ala-MCA to a lesser extent. Is likely involved in amino acid metabolism and bacterial growth of asaccharolytic P.gingivalis, that utilizes amino acids from extracellular proteinaceous nutrients as energy and carbon sources. This Porphyromonas gingivalis (strain ATCC 33277 / DSM 20709 / CIP 103683 / JCM 12257 / NCTC 11834 / 2561) protein is Dipeptidyl-peptidase 7.